The sequence spans 424 residues: Gamma-glutamyl phosphate reductase (424 aa).

The protein belongs to the gamma-glutamyl phosphate reductase family.

It localises to the cytoplasm. The catalysed reaction is L-glutamate 5-semialdehyde + phosphate + NADP(+) = L-glutamyl 5-phosphate + NADPH + H(+). It participates in amino-acid biosynthesis; L-proline biosynthesis; L-glutamate 5-semialdehyde from L-glutamate: step 2/2. In terms of biological role, catalyzes the NADPH-dependent reduction of L-glutamate 5-phosphate into L-glutamate 5-semialdehyde and phosphate. The product spontaneously undergoes cyclization to form 1-pyrroline-5-carboxylate. The protein is Gamma-glutamyl phosphate reductase of Shewanella sediminis (strain HAW-EB3).